A 396-amino-acid chain; its full sequence is Ribosomal RNA large subunit methyltransferase I (396 aa).

Residues alanine 2–phenylalanine 79 enclose the PUA domain.

Belongs to the methyltransferase superfamily. RlmI family.

The protein localises to the cytoplasm. The enzyme catalyses cytidine(1962) in 23S rRNA + S-adenosyl-L-methionine = 5-methylcytidine(1962) in 23S rRNA + S-adenosyl-L-homocysteine + H(+). Specifically methylates the cytosine at position 1962 (m5C1962) of 23S rRNA. This is Ribosomal RNA large subunit methyltransferase I from Shewanella oneidensis (strain ATCC 700550 / JCM 31522 / CIP 106686 / LMG 19005 / NCIMB 14063 / MR-1).